A 39-amino-acid polypeptide reads, in one-letter code: Photosystem I reaction center subunit IX (39 aa).

A helical membrane pass occupies residues 7 to 27 (FLTTAPVAFILFSSFVFALFI).

The protein belongs to the PsaJ family.

Its subcellular location is the cellular thylakoid membrane. May help in the organization of the PsaE and PsaF subunits. This Synechococcus sp. (strain JA-3-3Ab) (Cyanobacteria bacterium Yellowstone A-Prime) protein is Photosystem I reaction center subunit IX.